Reading from the N-terminus, the 201-residue chain is Large ribosomal subunit protein uL4 (201 aa).

The disordered stretch occupies residues 45 to 72 (AQKTRAEVTGSGKKPWRQKGTGRARAGS).

This sequence belongs to the universal ribosomal protein uL4 family. Part of the 50S ribosomal subunit.

One of the primary rRNA binding proteins, this protein initially binds near the 5'-end of the 23S rRNA. It is important during the early stages of 50S assembly. It makes multiple contacts with different domains of the 23S rRNA in the assembled 50S subunit and ribosome. Functionally, forms part of the polypeptide exit tunnel. The polypeptide is Large ribosomal subunit protein uL4 (Shewanella baltica (strain OS223)).